The sequence spans 393 residues: Glycocyamine kinase (393 aa).

The region spanning 7 to 94 (REKFAKENFP…FDRVIEEIHH (88 aa)) is the Phosphagen kinase N-terminal domain. One can recognise a Phosphagen kinase C-terminal domain in the interval 120-362 (YVKSCRIRCG…NVLIEADKRL (243 aa)). ATP is bound by residues 123–127 (SCRIR), H186, R231, 287–291 (RASVH), 315–320 (RGTGGE), and D330. Residues 367 to 393 (PIDDLTPRLNSSTGTSISATASRHMTL) form a disordered region. Positions 377 to 393 (SSTGTSISATASRHMTL) are enriched in low complexity.

It belongs to the ATP:guanido phosphotransferase family. In terms of assembly, monomer.

It catalyses the reaction guanidinoacetate + ATP = phosphoguanidinoacetate + ADP + H(+). The sequence is that of Glycocyamine kinase from Hediste diversicolor (Sandworm).